Reading from the N-terminus, the 151-residue chain is MGRMHSRGKGISASALPYKRSSPSWLKTTPQDVDESICKFAKKGLTPSQIGVILRDSHGIPQVKSVTGSKILRILKAHGLAPEIPEDLYHLIKKAVAIRKHLERNRKDKDSKFRLILVESRIHRLARYYKKTKKLPPVWKYESTTASTLVA.

The protein belongs to the universal ribosomal protein uS15 family.

The chain is Small ribosomal subunit protein uS15z (RPS13A) from Arabidopsis thaliana (Mouse-ear cress).